The following is a 376-amino-acid chain: Palmitoyltransferase PFA4 (376 aa).

The Cytoplasmic portion of the chain corresponds to 1 to 11 (MPVKLKWPWLG). A helical membrane pass occupies residues 12-32 (IAIPSFLIASIGYCAHYFILL). Residues 33 to 40 (NFLSLRKQ) are Lumenal-facing. A helical transmembrane segment spans residues 41–61 (LWYQFCQTMIWLSYYLAIYTP). At 62-122 (PGKPPTNFKP…NCVGYNNFPH (61 aa)) the chain is on the cytoplasmic side. A DHHC domain is found at 78-128 (VYCKKCKCYKPERSHHCKTCNQCVLMMDHHCPWTMNCVGYNNFPHFIRFLF). C108 serves as the catalytic S-palmitoyl cysteine intermediate. A helical transmembrane segment spans residues 123-143 (FIRFLFWVIVGTTSLAIFLTT). Topologically, residues 144–163 (RIHSIWVHRSSPSYLYYKSE) are lumenal. The helical transmembrane segment at 164–184 (LIFLTILTPLNAFILLTISIL) threads the bilayer. The Cytoplasmic segment spans residues 185–376 (MIRCLFNQIF…EDFGVDVDVE (192 aa)).

This sequence belongs to the DHHC palmitoyltransferase family. PFA4 subfamily.

The protein localises to the endoplasmic reticulum membrane. It carries out the reaction L-cysteinyl-[protein] + hexadecanoyl-CoA = S-hexadecanoyl-L-cysteinyl-[protein] + CoA. Functionally, mediates the reversible addition of palmitate to target proteins, thereby regulating their membrane association and biological function. This Candida glabrata (strain ATCC 2001 / BCRC 20586 / JCM 3761 / NBRC 0622 / NRRL Y-65 / CBS 138) (Yeast) protein is Palmitoyltransferase PFA4.